A 210-amino-acid polypeptide reads, in one-letter code: Natriuretic peptide BM026 (210 aa).

The first 26 residues, 1–26, serve as a signal peptide directing secretion; it reads MVGPSRLAGGGLLLLLLALLPVALDG. Residues 83 to 99 form a natriuretic peptide domain 1 region; the sequence is CFGHKIDRISHSSGMGC. A disulfide bridge links Cys-83 with Cys-99. The segment covering 122–134 has biased composition (basic and acidic residues); it reads ESKKSRAARDRMV. The segment at 122-210 is disordered; it reads ESKKSRAARD…QFNSKSSQVA (89 aa). The span at 140-150 shows a compositional bias: gly residues; the sequence is AGGGGGGGGGD. Basic and acidic residues predominate over residues 156 to 176; the sequence is ELAKKDQHNNCFGRRIDRISH. Residues 166–182 form a natriuretic peptide domain 2 region; the sequence is CFGRRIDRISHSTDLGC. Cys-166 and Cys-182 are oxidised to a cystine. The segment covering 201-210 has biased composition (polar residues); the sequence is QFNSKSSQVA.

The protein belongs to the natriuretic peptide family. Expressed by the venom gland.

The protein localises to the secreted. Functionally, natriuretic peptide that dose-dependently induces the rapid relaxation of rat aortic strips phenylephrine-precontracted. Acts by stimulating cGMP production in a dose-dependent manner (by probably activating NPR1 and/or NPR2). May also show potent hypotensive effects. The protein is Natriuretic peptide BM026 of Bungarus multicinctus (Many-banded krait).